The primary structure comprises 463 residues: L-seryl-tRNA(Sec) selenium transferase (463 aa).

Position 295 is an N6-(pyridoxal phosphate)lysine (Lys295).

This sequence belongs to the SelA family. In terms of assembly, homodecamer; pentamer of dimers. Binds only one seryl-tRNA(Sec) per dimer. It depends on pyridoxal 5'-phosphate as a cofactor.

Its subcellular location is the cytoplasm. It carries out the reaction L-seryl-tRNA(Sec) + selenophosphate + H(+) = L-selenocysteinyl-tRNA(Sec) + phosphate. Its pathway is aminoacyl-tRNA biosynthesis; selenocysteinyl-tRNA(Sec) biosynthesis; selenocysteinyl-tRNA(Sec) from L-seryl-tRNA(Sec) (bacterial route): step 1/1. Functionally, converts seryl-tRNA(Sec) to selenocysteinyl-tRNA(Sec) required for selenoprotein biosynthesis. The sequence is that of L-seryl-tRNA(Sec) selenium transferase from Shigella dysenteriae serotype 1 (strain Sd197).